A 406-amino-acid polypeptide reads, in one-letter code: DNA primase large subunit PriL (406 aa).

[4Fe-4S] cluster-binding residues include C302, C375, C384, and C389.

Belongs to the eukaryotic-type primase large subunit family. Heterodimer of a small subunit (PriS) and a large subunit (PriL). Requires [4Fe-4S] cluster as cofactor.

Its function is as follows. Regulatory subunit of DNA primase, an RNA polymerase that catalyzes the synthesis of short RNA molecules used as primers for DNA polymerase during DNA replication. Stabilizes and modulates the activity of the small subunit, increasing the rate of DNA synthesis, and conferring RNA synthesis capability. The DNA polymerase activity may enable DNA primase to also catalyze primer extension after primer synthesis. May also play a role in DNA repair. The chain is DNA primase large subunit PriL from Methanopyrus kandleri (strain AV19 / DSM 6324 / JCM 9639 / NBRC 100938).